Consider the following 1180-residue polypeptide: Integrin alpha-1 (1180 aa).

Positions 1–28 (MVPRRPASLEVTVACIWLLTVILGFCVS) are cleaved as a signal peptide. Over 29–1142 (FNVDVKNSMS…SKDGLPGRVP (1114 aa)) the chain is Extracellular. The stretch at 30–91 (NVDVKNSMSF…CPVGRERAMP (62 aa)) is one FG-GAP 1 repeat. A disulfide bridge links cysteine 82 with cysteine 92. Residues asparagine 100, asparagine 105, asparagine 112, asparagine 217, asparagine 317, asparagine 341, asparagine 402, asparagine 418, and asparagine 459 are each glycosylated (N-linked (GlcNAc...) asparagine). An FG-GAP 2 repeat occupies 101–160 (TSIPNVTEIKENMTFGSTLVTNPNGGFLACGPLYAYRCGHLHYTTGICSDVSPTFQVVNS). Residues 175-364 (IVLDGSNSIY…LGERIFALEA (190 aa)) form the VWFA domain. The stretch at 365–417 (TADQSAASFEMEMSQTGFSAHYSQDWVMLGAVGAYDWNGTVVMQKANQMVIPH) is one FG-GAP 3 repeat. FG-GAP repeat units follow at residues 422–474 (QTEP…DGNI), 475–537 (NILQ…RFEY), 556–614 (SCTK…TIRE), and 618–678 (QRIP…FEPN). Residues aspartate 497, aspartate 499, aspartate 501, and aspartate 505 each contribute to the Ca(2+) site. Residue asparagine 531 is glycosylated (N-linked (GlcNAc...) asparagine). Ca(2+) is bound by residues aspartate 579, asparagine 581, aspartate 583, aspartate 587, aspartate 641, asparagine 643, aspartate 645, and aspartate 649. Cysteines 687 and 696 form a disulfide. N-linked (GlcNAc...) asparagine glycosylation is found at asparagine 698, asparagine 747, and asparagine 779. Cysteines 702 and 755 form a disulfide. Cysteines 807 and 813 form a disulfide. Residues asparagine 820, asparagine 839, asparagine 882, asparagine 907, asparagine 938, asparagine 965, asparagine 973, and asparagine 1007 are each glycosylated (N-linked (GlcNAc...) asparagine). An intrachain disulfide couples cysteine 877 to cysteine 885. Disulfide bonds link cysteine 1029-cysteine 1062 and cysteine 1066-cysteine 1073. Residues asparagine 1084, asparagine 1103, and asparagine 1114 are each glycosylated (N-linked (GlcNAc...) asparagine). The helical transmembrane segment at 1143–1165 (LWVILLSAFAGLLLLMLLILALW) threads the bilayer. At 1166–1180 (KIGFFKRPLKKKMEK) the chain is on the cytoplasmic side. A GFFKR motif motif is present at residues 1168–1172 (GFFKR).

The protein belongs to the integrin alpha chain family. As to quaternary structure, heterodimer of an alpha and a beta subunit. Alpha-1 associates with beta-1. Interacts with RAB21. Interacts (via cytoplasmic domain) with PTPN2; activates PTPN2 phosphatase activity towards EGFR and negatively regulates EGF signaling.

The protein localises to the membrane. In terms of biological role, integrin alpha-1/beta-1 is a receptor for laminin and collagen. It recognizes the proline-hydroxylated sequence G-F-P-G-E-R in collagen. Involved in anchorage-dependent, negative regulation of EGF-stimulated cell growth. This Rattus norvegicus (Rat) protein is Integrin alpha-1 (Itga1).